Reading from the N-terminus, the 333-residue chain is Nucleoid-associated protein PSPPH_1145 (333 aa).

This sequence belongs to the YejK family.

It is found in the cytoplasm. The protein localises to the nucleoid. This Pseudomonas savastanoi pv. phaseolicola (strain 1448A / Race 6) (Pseudomonas syringae pv. phaseolicola (strain 1448A / Race 6)) protein is Nucleoid-associated protein PSPPH_1145.